The following is a 597-amino-acid chain: MTPGSRSAMRSRSVCGAIALAVLVTVSGCASLPDSSTPQAIGTINRDSPGSSVAAPAPGREPDLLLRDFFKASTDPTDRHLAARQFLTPGVSGRWDDAASATIVDKVDVLPETRSADQATYTIRANKVGQLEPGGLYVAEEGSFETRISLELQGGEWRISELPAGVILDRAQFLNTYQRKSLYFLDPAGTTVVPDPRWVSGAQDQMASQLIGLLIDGPKAALAPAVRNELGDGVSVRGPITKADGRTAQVGVGLGGIRIDFTGVPPMDAQQKQLFAAQVIWTLANAEISGPYVLLADGEPFDERFPNGWTTADVASMNPFATSSATVGLHALREGSMVSVTETGVTPVPGYFGAARNMRSLALSQDGKLVAAVADTGRPAPEPASSLMVGAYEDGAASVLEGGAITRPTWAPDNSAIWAAVNGNTVIRVLREPGTGRTSVVNVDAGAVTALGATITELRLSRDGVRAALIVDGKVYLAIVTQMPGGAYALTNPRAVAIGLGSPALSLDWSTSDTIVVARAASDIPVVQVAVDGSRMDALPSRNLTAPVVAVDASTTTEFVADSRAVFQLNNNDPAGDRYWREVPGLTGVKAIPVLPG.

A signal peptide spans 1–28 (MTPGSRSAMRSRSVCGAIALAVLVTVSG). A lipid anchor (N-palmitoyl cysteine) is attached at Cys29. The S-diacylglycerol cysteine moiety is linked to residue Cys29. A compositionally biased stretch (polar residues) spans 39-51 (QAIGTINRDSPGS). The disordered stretch occupies residues 39–59 (QAIGTINRDSPGSSVAAPAPG).

It belongs to the LpqB lipoprotein family.

It is found in the cell membrane. This Rhodococcus opacus (strain B4) protein is Lipoprotein LpqB.